The sequence spans 428 residues: Elongation factor 1-alpha (428 aa).

The 211-residue stretch at 5-215 (KPHVNIVFIG…ALDQIPEPPK (211 aa)) folds into the tr-type G domain. Positions 14–21 (GHVDHGKS) are G1. 14–21 (GHVDHGKS) contributes to the GTP binding site. Mg(2+) is bound at residue Ser-21. The G2 stretch occupies residues 68 to 72 (GITID). Residues 89–92 (DAPG) form a G3 region. GTP contacts are provided by residues 89–93 (DAPGH) and 144–147 (NKMD). The G4 stretch occupies residues 144-147 (NKMD). Positions 181–183 (SAW) are G5.

The protein belongs to the TRAFAC class translation factor GTPase superfamily. Classic translation factor GTPase family. EF-Tu/EF-1A subfamily.

It localises to the cytoplasm. It carries out the reaction GTP + H2O = GDP + phosphate + H(+). Functionally, GTP hydrolase that promotes the GTP-dependent binding of aminoacyl-tRNA to the A-site of ribosomes during protein biosynthesis. This chain is Elongation factor 1-alpha, found in Thermococcus gammatolerans (strain DSM 15229 / JCM 11827 / EJ3).